A 200-amino-acid polypeptide reads, in one-letter code: Peptidyl-tRNA hydrolase (200 aa).

Position 16 (Y16) interacts with tRNA. The active-site Proton acceptor is the H21. Residues F67, N69, and N115 each coordinate tRNA.

The protein belongs to the PTH family. As to quaternary structure, monomer.

Its subcellular location is the cytoplasm. It carries out the reaction an N-acyl-L-alpha-aminoacyl-tRNA + H2O = an N-acyl-L-amino acid + a tRNA + H(+). Hydrolyzes ribosome-free peptidyl-tRNAs (with 1 or more amino acids incorporated), which drop off the ribosome during protein synthesis, or as a result of ribosome stalling. Functionally, catalyzes the release of premature peptidyl moieties from peptidyl-tRNA molecules trapped in stalled 50S ribosomal subunits, and thus maintains levels of free tRNAs and 50S ribosomes. The protein is Peptidyl-tRNA hydrolase of Prochlorococcus marinus (strain AS9601).